A 268-amino-acid chain; its full sequence is Nickel import ATP-binding protein NikE (268 aa).

The ABC transporter domain occupies 4–252 (LNVSGLSHHY…SSDAGRVLQN (249 aa)). 45-52 (GRSGCGKS) is an ATP binding site.

The protein belongs to the ABC transporter superfamily. Nickel importer (TC 3.A.1.5.3) family. As to quaternary structure, the complex is composed of two ATP-binding proteins (NikD and NikE), two transmembrane proteins (NikB and NikC) and a solute-binding protein (NikA).

It localises to the cell inner membrane. The catalysed reaction is Ni(2+)(out) + ATP + H2O = Ni(2+)(in) + ADP + phosphate + H(+). In terms of biological role, part of the ABC transporter complex NikABCDE involved in nickel import. Responsible for energy coupling to the transport system. This chain is Nickel import ATP-binding protein NikE, found in Shigella sonnei (strain Ss046).